Consider the following 90-residue polypeptide: Bombyxin B-9 (90 aa).

A signal peptide spans 1–20 (MMKTAVMFILVVVISLTYSS). Intrachain disulfides connect Cys30–Cys75, Cys42–Cys88, and Cys74–Cys79. Positions 49–64 (GGAQYAPYWQETYLRS) are cleaved as a propeptide — c peptide like.

It belongs to the insulin family. Heterodimer of a B chain and an A chain linked by two disulfide bonds.

Its subcellular location is the secreted. In terms of biological role, brain peptide responsible for activation of prothoracic glands to produce ecdysone in insects. The sequence is that of Bombyxin B-9 (BBXB9) from Bombyx mori (Silk moth).